A 33-amino-acid polypeptide reads, in one-letter code: Neutrophil defensin 1 (33 aa).

Disulfide bonds link C3–C31, C5–C20, and C10–C30.

The protein belongs to the alpha-defensin family.

The protein resides in the secreted. Anti-fungal and bactericidal activity, greater against Gram-positive bacteria. This is Neutrophil defensin 1 from Mesocricetus auratus (Golden hamster).